We begin with the raw amino-acid sequence, 488 residues long: V-type proton ATPase subunit B 1 (488 aa).

The protein belongs to the ATPase alpha/beta chains family. V-ATPase is a heteromultimeric enzyme composed of a peripheral catalytic V1 complex (main components: subunits A, B, C, D, E, and F) attached to an integral membrane V0 proton pore complex (main component: the proteolipid protein).

Non-catalytic subunit of the peripheral V1 complex of vacuolar ATPase. V-ATPase is responsible for acidifying a variety of intracellular compartments in eukaryotic cells. The protein is V-type proton ATPase subunit B 1 of Hordeum vulgare (Barley).